Reading from the N-terminus, the 95-residue chain is Acylphosphatase (95 aa).

An Acylphosphatase-like domain is found at 7-95 (RLTAWVLGTV…PKGEVGFRTR (89 aa)). Catalysis depends on residues Arg-22 and Asn-40.

This sequence belongs to the acylphosphatase family.

The enzyme catalyses an acyl phosphate + H2O = a carboxylate + phosphate + H(+). This Corynebacterium diphtheriae (strain ATCC 700971 / NCTC 13129 / Biotype gravis) protein is Acylphosphatase (acyP).